The chain runs to 302 residues: Eukaryotic translation initiation factor 3 subunit F (302 aa).

The 143-residue stretch at Ile-23–Gly-165 folds into the MPN domain. Ser-162 bears the Phosphoserine mark.

This sequence belongs to the eIF-3 subunit F family. Component of the eukaryotic translation initiation factor 3 (eIF-3) complex. The eIF-3 complex appears to include tif32/eif3a, SPAC25G10.08/eif3b, tif33/eif3c, SPBC4C3.07/eif3f, tif35/eif3g and sum1/eif3i. This set of common subunits may also associate exclusively with either moe1/eif3d and int6/eif3e, or with SPAC821.05/eif3h and SPAC1751.03/eif3m. The eIF-3 complex may also include SPAC3A12.13c/eif3j.

Its subcellular location is the cytoplasm. Component of the eukaryotic translation initiation factor 3 (eIF-3) complex, which is involved in protein synthesis of a specialized repertoire of mRNAs and, together with other initiation factors, stimulates binding of mRNA and methionyl-tRNAi to the 40S ribosome. The eIF-3 complex specifically targets and initiates translation of a subset of mRNAs involved in cell proliferation. In Schizosaccharomyces pombe (strain 972 / ATCC 24843) (Fission yeast), this protein is Eukaryotic translation initiation factor 3 subunit F.